Reading from the N-terminus, the 450-residue chain is Glucose-6-phosphate isomerase (450 aa).

The active-site Proton donor is the Glu291. Active-site residues include His312 and Lys426.

Belongs to the GPI family.

The protein localises to the cytoplasm. The catalysed reaction is alpha-D-glucose 6-phosphate = beta-D-fructose 6-phosphate. The protein operates within carbohydrate biosynthesis; gluconeogenesis. It functions in the pathway carbohydrate degradation; glycolysis; D-glyceraldehyde 3-phosphate and glycerone phosphate from D-glucose: step 2/4. Catalyzes the reversible isomerization of glucose-6-phosphate to fructose-6-phosphate. The polypeptide is Glucose-6-phosphate isomerase (Clostridium botulinum (strain Hall / ATCC 3502 / NCTC 13319 / Type A)).